We begin with the raw amino-acid sequence, 388 residues long: Succinate--CoA ligase [ADP-forming] subunit beta (388 aa).

Residues 9–244 enclose the ATP-grasp domain; the sequence is KEILRKYNVP…LDEEDANEIE (236 aa). ATP contacts are provided by residues K46, 53 to 55, E99, A102, and E107; that span reads GRG. Residues N199 and D213 each coordinate Mg(2+). Residues N264 and 321 to 323 contribute to the substrate site; that span reads GIM.

It belongs to the succinate/malate CoA ligase beta subunit family. As to quaternary structure, heterotetramer of two alpha and two beta subunits. Requires Mg(2+) as cofactor.

The enzyme catalyses succinate + ATP + CoA = succinyl-CoA + ADP + phosphate. It carries out the reaction GTP + succinate + CoA = succinyl-CoA + GDP + phosphate. The protein operates within carbohydrate metabolism; tricarboxylic acid cycle; succinate from succinyl-CoA (ligase route): step 1/1. Succinyl-CoA synthetase functions in the citric acid cycle (TCA), coupling the hydrolysis of succinyl-CoA to the synthesis of either ATP or GTP and thus represents the only step of substrate-level phosphorylation in the TCA. The beta subunit provides nucleotide specificity of the enzyme and binds the substrate succinate, while the binding sites for coenzyme A and phosphate are found in the alpha subunit. The protein is Succinate--CoA ligase [ADP-forming] subunit beta of Cupriavidus taiwanensis (strain DSM 17343 / BCRC 17206 / CCUG 44338 / CIP 107171 / LMG 19424 / R1) (Ralstonia taiwanensis (strain LMG 19424)).